A 301-amino-acid chain; its full sequence is MGQKINPTGFRLAVSRNWASRWYASNRDFAGMLAEDIKVREYLKAKLKNAAVSRVLIERPAKNARITIFSARPGVVIGKKGEDIENLKKELSRQLGVPVAVNIEEVRKPEIDAKLIADSITQQLEKRIMFRRAMKRAMQNAMRLGALGIKIMSSGRLNGIEIARCEWYREGRVPLHTLRADIDYGTSEAKTTYGVIGVKVWVYKGDTLGRGESPGAKLDAAPSDEERKPRGPRRDARPGSDRPAPRGARAPRAPAGGTNTAPADGSDKPAEATPGSDAPKTTVKRVRKAAPAAAADGTKTE.

The KH type-2 domain maps to 39–107 (VREYLKAKLK…PVAVNIEEVR (69 aa)). A disordered region spans residues 211–301 (GESPGAKLDA…AAAADGTKTE (91 aa)). Residues 224–244 (DEERKPRGPRRDARPGSDRPA) show a composition bias toward basic and acidic residues. Over residues 245–257 (PRGARAPRAPAGG) the composition is skewed to low complexity.

This sequence belongs to the universal ribosomal protein uS3 family. Part of the 30S ribosomal subunit. Forms a tight complex with proteins S10 and S14.

Binds the lower part of the 30S subunit head. Binds mRNA in the 70S ribosome, positioning it for translation. This chain is Small ribosomal subunit protein uS3, found in Polaromonas sp. (strain JS666 / ATCC BAA-500).